Reading from the N-terminus, the 793-residue chain is Transcription factor castor (793 aa).

The segment covering 44–53 (NEDISSSTSV) has biased composition (polar residues). Disordered stretches follow at residues 44-101 (NEDI…NLIA), 199-259 (VTST…HTNA), and 272-296 (LESTTDSLDSPSMYTPVKQPADSSY). Low complexity-rich tracts occupy residues 54–68 (QQQQQQQQEQLQQPQ), 81–98 (SSQNTNCSSSRSCSPNSN), and 210–221 (ATPAPSAGATAG). Residue threonine 211 is modified to Phosphothreonine. Serine 215 is subject to Phosphoserine. Acidic residues predominate over residues 233–242 (ESADDDEDDD). The span at 245–254 (LSSLTSCSSS) shows a compositional bias: low complexity. The segment covering 273–284 (ESTTDSLDSPSM) has biased composition (polar residues). The C2H2-type 1; atypical zinc-finger motif lies at 377 to 402 (FHCHEEPCQGKILSKKDDIIRHLKWH). C2H2-type zinc fingers lie at residues 439–463 (YHCVYEHCPKVYVSTSDVQMHANFH), 498–522 (YHCCREGCTHTFKNKADMDKHKTYH), and 556–580 (IHCVREGCDYILHSSSQMISHKRKH). Residues 599-682 (EESSLDAMPQ…RLKVEDESSN (84 aa)) are disordered. Over residues 608–629 (QQQQQQQQQQPTSLSQSQSSSS) the composition is skewed to low complexity. The segment covering 630-644 (VCGGSNTSTPLSSLS) has biased composition (polar residues). Positions 650 to 662 (ARKRGRPPKKIQL) form a DNA-binding region, a.T hook.

Expressed in a specific subset of neuroblasts in the ventral nerve cord and the procephalic region in the embryo. Expressed in many, if not all, late delaminating NBs, and in early NBs, but only after they have undergone several rounds of ganglion mother cell-producing divisions.

It is found in the nucleus. Transcription factor that specifies expression of key genes in developing central nervous system (CNS). Essential for many, if not all, late developing neuroblastoma (NB) sublineages. Binds to the 5'-[CG]C[CT][CT]AAAAA[AT]-3' DNA sequence, like hb, suggesting that cas and hb act as a late regulators in early and late CNS NB sublineage, respectively. Acts by repressing expression of nub/pdm-1 and pdm2/pdm-2 POU genes, and restrict their pattern of expression in appropriate cells. Required for a full expression of vvl/drifter and acj6/I-POU; it is however unknown whether it directly activates these genes. Controls engrailed (en) expression in the ventral nerve cord. The sequence is that of Transcription factor castor (cas) from Drosophila melanogaster (Fruit fly).